The chain runs to 93 residues: Small ribosomal subunit protein uS19 (93 aa).

Belongs to the universal ribosomal protein uS19 family.

Protein S19 forms a complex with S13 that binds strongly to the 16S ribosomal RNA. The protein is Small ribosomal subunit protein uS19 of Streptococcus gordonii (strain Challis / ATCC 35105 / BCRC 15272 / CH1 / DL1 / V288).